The sequence spans 417 residues: Serine hydroxymethyltransferase (417 aa).

Residues L121 and 125–127 (GHL) contribute to the (6S)-5,6,7,8-tetrahydrofolate site. K229 carries the post-translational modification N6-(pyridoxal phosphate)lysine. 355-357 (SPF) serves as a coordination point for (6S)-5,6,7,8-tetrahydrofolate.

The protein belongs to the SHMT family. Homodimer. It depends on pyridoxal 5'-phosphate as a cofactor.

The protein localises to the cytoplasm. The enzyme catalyses (6R)-5,10-methylene-5,6,7,8-tetrahydrofolate + glycine + H2O = (6S)-5,6,7,8-tetrahydrofolate + L-serine. Its pathway is one-carbon metabolism; tetrahydrofolate interconversion. The protein operates within amino-acid biosynthesis; glycine biosynthesis; glycine from L-serine: step 1/1. Catalyzes the reversible interconversion of serine and glycine with tetrahydrofolate (THF) serving as the one-carbon carrier. This reaction serves as the major source of one-carbon groups required for the biosynthesis of purines, thymidylate, methionine, and other important biomolecules. Also exhibits THF-independent aldolase activity toward beta-hydroxyamino acids, producing glycine and aldehydes, via a retro-aldol mechanism. The protein is Serine hydroxymethyltransferase of Tolumonas auensis (strain DSM 9187 / NBRC 110442 / TA 4).